Consider the following 140-residue polypeptide: Transcription antitermination protein NusB (140 aa).

The protein belongs to the NusB family.

Involved in transcription antitermination. Required for transcription of ribosomal RNA (rRNA) genes. Binds specifically to the boxA antiterminator sequence of the ribosomal RNA (rrn) operons. This chain is Transcription antitermination protein NusB, found in Pseudothermotoga lettingae (strain ATCC BAA-301 / DSM 14385 / NBRC 107922 / TMO) (Thermotoga lettingae).